Consider the following 2164-residue polypeptide: Hemagglutinin A (2164 aa).

A signal peptide spans 1–25; the sequence is MRKLNSLFSLAVLLSLLCWGQTAAA. 3 peptidase C25-like regions span residues 26–539, 540–991, and 992–1443; these read QGGP…TPPP, GGSS…TPPP, and GGTS…TPPP. 2 disordered regions span residues 493–512 and 520–541; these read WDAP…LSES and SWKT…PPGG. Residues 496–508 are compositionally biased toward low complexity; that stretch reads PNGTPNPNPGTTT.

It belongs to the peptidase C25 family.

Agglutinates erythrocytes. The polypeptide is Hemagglutinin A (hagA) (Porphyromonas gingivalis (strain ATCC BAA-308 / W83)).